Here is a 269-residue protein sequence, read N- to C-terminus: Tryptophan synthase alpha chain (269 aa).

Residues glutamate 45 and aspartate 56 each act as proton acceptor in the active site.

The protein belongs to the TrpA family. In terms of assembly, tetramer of two alpha and two beta chains.

It catalyses the reaction (1S,2R)-1-C-(indol-3-yl)glycerol 3-phosphate + L-serine = D-glyceraldehyde 3-phosphate + L-tryptophan + H2O. Its pathway is amino-acid biosynthesis; L-tryptophan biosynthesis; L-tryptophan from chorismate: step 5/5. In terms of biological role, the alpha subunit is responsible for the aldol cleavage of indoleglycerol phosphate to indole and glyceraldehyde 3-phosphate. The protein is Tryptophan synthase alpha chain of Shouchella clausii (strain KSM-K16) (Alkalihalobacillus clausii).